The chain runs to 760 residues: Protein P1 (760 aa).

The signal sequence occupies residues 1–33 (MASFLKPVNSQGLWLSLLLAITYLFLLPSAGQS). Transmembrane regions (helical) follow at residues 172–192 (LIEF…VYVA), 194–214 (AVPG…WAWP), 218–235 (ASSL…IGFL), and 240–260 (IGLI…WSLL). Positions 318–515 (IPGVQIKKLR…SSSPKFTGCE (198 aa)) constitute a Peptidase S39 domain. Residues histidine 366, aspartate 396, and serine 465 each act as for protease activity in the active site. Disordered stretches follow at residues 572 to 672 (GLWA…LSQV) and 684 to 760 (LTVQ…PRRN). A compositionally biased stretch (basic and acidic residues) spans 621 to 643 (RAEKVRHVRRSEMTPEQKRADNL).

The protein belongs to the peptidase S39B family. Specific enzymatic cleavages in vivo yield mature proteins. The protease probably cleaves itself and releases the VPg protein.

Its subcellular location is the membrane. Its function is as follows. Precursor from which the VPg molecule is probably released at the onset of the RNA synthesis. Essential for virus replication. This Pea enation mosaic virus-1 (strain WSG) (PEMV-1) protein is Protein P1.